A 406-amino-acid chain; its full sequence is Cysteine desulfurase (406 aa).

At lysine 226 the chain carries N6-(pyridoxal phosphate)lysine. Cysteine 364 (cysteine persulfide intermediate) is an active-site residue.

It belongs to the class-V pyridoxal-phosphate-dependent aminotransferase family. Csd subfamily. Homodimer. Interacts with SufE and the SufBCD complex composed of SufB, SufC and SufD. The interaction with SufE is required to mediate the direct transfer of the sulfur atom from the S-sulfanylcysteine. The cofactor is pyridoxal 5'-phosphate.

The protein resides in the cytoplasm. The catalysed reaction is (sulfur carrier)-H + L-cysteine = (sulfur carrier)-SH + L-alanine. The enzyme catalyses L-selenocysteine + AH2 = hydrogenselenide + L-alanine + A + H(+). It participates in cofactor biosynthesis; iron-sulfur cluster biosynthesis. Cysteine desulfurases mobilize the sulfur from L-cysteine to yield L-alanine, an essential step in sulfur metabolism for biosynthesis of a variety of sulfur-containing biomolecules. Component of the suf operon, which is activated and required under specific conditions such as oxidative stress and iron limitation. Acts as a potent selenocysteine lyase in vitro, that mobilizes selenium from L-selenocysteine. Selenocysteine lyase activity is however unsure in vivo. In Salmonella dublin (strain CT_02021853), this protein is Cysteine desulfurase.